The chain runs to 238 residues: ATP synthase subunit a (238 aa).

Transmembrane regions (helical) follow at residues 18-38, 76-96, 114-134, 166-186, and 193-213; these read LTLL…VFWA, YSLL…LGLF, NLAF…IEGI, SLAI…GLIV, and LYWW…SIFI.

Belongs to the ATPase A chain family. F-type ATPases have 2 components, CF(1) - the catalytic core - and CF(0) - the membrane proton channel. CF(1) has five subunits: alpha(3), beta(3), gamma(1), delta(1), epsilon(1). CF(0) has three main subunits: a(1), b(2) and c(9-12). The alpha and beta chains form an alternating ring which encloses part of the gamma chain. CF(1) is attached to CF(0) by a central stalk formed by the gamma and epsilon chains, while a peripheral stalk is formed by the delta and b chains.

It is found in the cell membrane. In terms of biological role, key component of the proton channel; it plays a direct role in the translocation of protons across the membrane. The chain is ATP synthase subunit a from Streptococcus equi subsp. zooepidemicus (strain H70).